We begin with the raw amino-acid sequence, 592 residues long: LIM domain-binding protein 1 (592 aa).

Disordered regions lie at residues 14–41 (GHPP…NSQN) and 305–368 (PAPE…NPMT). Polar residues predominate over residues 23-41 (ESSNSHYGMPPSQGTNSQN). A compositionally biased stretch (low complexity) spans 322–344 (PAANPRGSKKATAAAAAAAAAAT). The span at 352–368 (PTASPANNQQFPPNPMT) shows a compositional bias: polar residues. Residues 378–417 (DVMVVGEPSMMGSEFGENDERTISRVENSQYDPNAMQMQS) form the LIM interaction domain (LID) domain. 2 disordered regions span residues 437–458 (HHPG…MGSQ) and 559–592 (GGMQ…MITG). Residues 577-586 (GPPPQWPPPN) show a composition bias toward pro residues.

It belongs to the LDB family. Interacts with blmp-1. As to expression, expressed in all neurons and some other tissues of the adult, including vulval muscle, and, in males, all the neurons of the tail region. Expressed in vulval cells.

Binds to the LIM domain of LIM domain-containing transcription factors. Required for the blmp-1-mediated transcriptional activation or repression of several hypodermal genes, such as bed-3. Regulates sam-10 nuclear localization in PLM neurons. Has a role in synaptic differentiation of PLM mechanosensory neurons. Involved in gonadogenesis. The protein is LIM domain-binding protein 1 of Caenorhabditis elegans.